Consider the following 161-residue polypeptide: Arachidonate 5-lipoxygenase-activating protein (161 aa).

The Lumenal portion of the chain corresponds to 1–8 (MDQEAVGN). The helical transmembrane segment at 9–30 (VVLLAIVTLISVVQNAFFAHKV) threads the bilayer. The Cytoplasmic portion of the chain corresponds to 31–52 (ELESKAQSGRSFQRTGTLAFER). Residues 53–77 (VYTANQNCVDAYPTFLVVLWTAGLL) form a helical membrane-spanning segment. Topologically, residues 78–80 (CSQ) are lumenal. The chain crosses the membrane as a helical span at residues 81-102 (VPAAFAGLMYLFVRQKYFVGYL). Topologically, residues 103–107 (GERTQ) are cytoplasmic. An intramembrane segment occupies 108–115 (STPGYIFG). Residues 116–128 (KRIILFLFLMSLA) traverse the membrane as a helical segment. The Lumenal segment spans residues 129 to 161 (GILNHYLIFFFGSDFENYIRTITTTISPLLLIP).

This sequence belongs to the MAPEG family. In terms of assembly, homotrimer. Interacts with LTC4S and ALOX5.

It localises to the nucleus membrane. The protein resides in the endoplasmic reticulum membrane. Functionally, required for leukotriene biosynthesis by ALOX5 (5-lipoxygenase). Anchors ALOX5 to the membrane. Binds arachidonic acid, and could play an essential role in the transfer of arachidonic acid to ALOX5. Binds to MK-886, a compound that blocks the biosynthesis of leukotrienes. The sequence is that of Arachidonate 5-lipoxygenase-activating protein (Alox5ap) from Rattus norvegicus (Rat).